A 746-amino-acid chain; its full sequence is Proline--tRNA ligase (746 aa).

The required for editing of incorrectly charged tRNA stretch occupies residues 1–223 (MNNNTNGEII…NSNNNNNNNN (223 aa)). Over residues 181–201 (TSKARVDKKEDVQEEMAKNEE) the composition is skewed to basic and acidic residues. A disordered region spans residues 181-226 (TSKARVDKKEDVQEEMAKNEELQNNNNNNKNNSNSNNNNNNNNNHI). The span at 204-224 (NNNNNNKNNSNSNNNNNNNNN) shows a compositional bias: low complexity. Arg-390 serves as a coordination point for L-proline. ATP is bound by residues 390-394 (RWEFK), 401-405 (RTREF), and 475-477 (QAA). His-480 contributes to the L-proline binding site. Residue 512–514 (TTR) coordinates ATP.

Belongs to the class-II aminoacyl-tRNA synthetase family. ProS type 3 subfamily. Homodimer.

Its subcellular location is the cytoplasm. The enzyme catalyses tRNA(Pro) + L-proline + ATP = L-prolyl-tRNA(Pro) + AMP + diphosphate. With respect to regulation, inhibited by the quinazolinone-based compound febrifugine from the Chinese plant Dichroa febrifuga which is used to treat malaria-associated fever. Also inhibited by febrifugine derivatives such as halofuginone. In terms of biological role, catalyzes the attachment of proline to tRNA(Pro) in a two-step reaction: proline is first activated by ATP to form Pro-AMP and then transferred to the acceptor end of tRNA(Pro). Functions in trans to edit the amino acid moiety from incorrectly charged Ala-tRNA(Pro). Has no activity on correctly charged Pro-tRNA(Pro) or Ala-tRNA(Ala). This chain is Proline--tRNA ligase, found in Plasmodium falciparum (isolate 3D7).